A 404-amino-acid polypeptide reads, in one-letter code: Tryptophan synthase beta chain (404 aa).

The residue at position 98 (lysine 98) is an N6-(pyridoxal phosphate)lysine.

It belongs to the TrpB family. As to quaternary structure, tetramer of two alpha and two beta chains. Pyridoxal 5'-phosphate is required as a cofactor.

It catalyses the reaction (1S,2R)-1-C-(indol-3-yl)glycerol 3-phosphate + L-serine = D-glyceraldehyde 3-phosphate + L-tryptophan + H2O. The protein operates within amino-acid biosynthesis; L-tryptophan biosynthesis; L-tryptophan from chorismate: step 5/5. Its function is as follows. The beta subunit is responsible for the synthesis of L-tryptophan from indole and L-serine. This Rhodopseudomonas palustris (strain BisA53) protein is Tryptophan synthase beta chain.